Consider the following 703-residue polypeptide: Fatty acid oxidation complex subunit alpha (703 aa).

Residues 1–190 (MSEQKAFSLN…KLGVVDACVP (190 aa)) form an enoyl-CoA hydratase region. The segment at 308-703 (AAVKKVGVLG…TRAGEGRTFY (396 aa)) is 3-hydroxyacyl-CoA dehydrogenase.

The protein in the N-terminal section; belongs to the enoyl-CoA hydratase/isomerase family. It in the central section; belongs to the 3-hydroxyacyl-CoA dehydrogenase family. Heterotetramer of two alpha chains (FadJ) and two beta chains (FadI).

It localises to the cytoplasm. It catalyses the reaction a (3S)-3-hydroxyacyl-CoA = a (2E)-enoyl-CoA + H2O. It carries out the reaction a 4-saturated-(3S)-3-hydroxyacyl-CoA = a (3E)-enoyl-CoA + H2O. The enzyme catalyses a (3S)-3-hydroxyacyl-CoA + NAD(+) = a 3-oxoacyl-CoA + NADH + H(+). The catalysed reaction is (3S)-3-hydroxybutanoyl-CoA = (3R)-3-hydroxybutanoyl-CoA. It participates in lipid metabolism; fatty acid beta-oxidation. Catalyzes the formation of a hydroxyacyl-CoA by addition of water on enoyl-CoA. Also exhibits 3-hydroxyacyl-CoA epimerase and 3-hydroxyacyl-CoA dehydrogenase activities. The protein is Fatty acid oxidation complex subunit alpha of Vibrio parahaemolyticus serotype O3:K6 (strain RIMD 2210633).